The primary structure comprises 349 residues: Homeobox-leucine zipper protein HOX7 (349 aa).

Positions Arg42 to Arg186 are disordered. Composition is skewed to polar residues over residues Ser89–Met99 and Ser121–Val135. Residues Gly150–Gln209 constitute a DNA-binding region (homeobox). Basic and acidic residues predominate over residues Asp167–Leu183. Residues Lys208 to Leu252 form a leucine-zipper region.

The protein belongs to the HD-ZIP homeobox family. Class II subfamily. Homodimer. May form a heterodimer with HOX1, HOX2 or HOX3. In terms of tissue distribution, expressed in seedlings, roots, leaves, nodes, internodes, flowers and embryo.

It localises to the nucleus. Probable transcription factor that binds to the DNA sequence 5'-CAAT[GC]ATTG-3'. The chain is Homeobox-leucine zipper protein HOX7 (HOX7) from Oryza sativa subsp. japonica (Rice).